We begin with the raw amino-acid sequence, 171 residues long: MKNPTMLKLKDKLLAVIEELITKENKYRFITGGALGTDQAACWCVHILKKKHPHIKNIIATPFKEQDKVWSADQKMWYKRMLNVADEIINVEELDKYKVSGEKPGEFSPAKMQKRNEYMIDHSEAIVAVYDGSKSGTRNCLNYAKKTYLGHQLWRLHPDFNFELDITYFVG.

This is an uncharacterized protein from Bacillus subtilis (strain 168).